We begin with the raw amino-acid sequence, 126 residues long: Large ribosomal subunit protein bL17 (126 aa).

Belongs to the bacterial ribosomal protein bL17 family. Part of the 50S ribosomal subunit. Contacts protein L32.

This is Large ribosomal subunit protein bL17 from Nitrosococcus oceani (strain ATCC 19707 / BCRC 17464 / JCM 30415 / NCIMB 11848 / C-107).